A 40-amino-acid polypeptide reads, in one-letter code: Photosystem II reaction center protein J (40 aa).

Residues 8–28 (IPLWLIGTVAGILVLGLLGIF) traverse the membrane as a helical segment.

This sequence belongs to the PsbJ family. PSII is composed of 1 copy each of membrane proteins PsbA, PsbB, PsbC, PsbD, PsbE, PsbF, PsbH, PsbI, PsbJ, PsbK, PsbL, PsbM, PsbT, PsbX, PsbY, PsbZ, Psb30/Ycf12, at least 3 peripheral proteins of the oxygen-evolving complex and a large number of cofactors. It forms dimeric complexes.

Its subcellular location is the plastid. The protein localises to the chloroplast thylakoid membrane. Its function is as follows. One of the components of the core complex of photosystem II (PSII). PSII is a light-driven water:plastoquinone oxidoreductase that uses light energy to abstract electrons from H(2)O, generating O(2) and a proton gradient subsequently used for ATP formation. It consists of a core antenna complex that captures photons, and an electron transfer chain that converts photonic excitation into a charge separation. The polypeptide is Photosystem II reaction center protein J (Physcomitrium patens (Spreading-leaved earth moss)).